Consider the following 352-residue polypeptide: Phosphatidylglycerol--prolipoprotein diacylglyceryl transferase (352 aa).

The next 4 membrane-spanning stretches (helical) occupy residues 20–40, 55–75, 97–117, and 122–142; these read WYGL…TWLA, FITY…VLFY, EGGM…LLYA, and VNSL…VFFG. Arginine 143 serves as a coordination point for a 1,2-diacyl-sn-glycero-3-phospho-(1'-sn-glycerol). Helical transmembrane passes span 248–268, 275–295, and 314–334; these read SQLF…FFLW, GFIA…DEHF, and WLSL…TRAA.

It belongs to the Lgt family.

It localises to the cell inner membrane. The catalysed reaction is L-cysteinyl-[prolipoprotein] + a 1,2-diacyl-sn-glycero-3-phospho-(1'-sn-glycerol) = an S-1,2-diacyl-sn-glyceryl-L-cysteinyl-[prolipoprotein] + sn-glycerol 1-phosphate + H(+). Its pathway is protein modification; lipoprotein biosynthesis (diacylglyceryl transfer). Its function is as follows. Catalyzes the transfer of the diacylglyceryl group from phosphatidylglycerol to the sulfhydryl group of the N-terminal cysteine of a prolipoprotein, the first step in the formation of mature lipoproteins. This chain is Phosphatidylglycerol--prolipoprotein diacylglyceryl transferase, found in Bdellovibrio bacteriovorus (strain ATCC 15356 / DSM 50701 / NCIMB 9529 / HD100).